The following is a 427-amino-acid chain: Enolase (427 aa).

Gln-163 lines the (2R)-2-phosphoglycerate pocket. The Proton donor role is filled by Glu-205. The Mg(2+) site is built by Asp-242, Glu-285, and Asp-312. (2R)-2-phosphoglycerate contacts are provided by Lys-337, Arg-366, Ser-367, and Lys-388. Lys-337 functions as the Proton acceptor in the catalytic mechanism.

This sequence belongs to the enolase family. Mg(2+) is required as a cofactor.

It localises to the cytoplasm. The protein resides in the secreted. The protein localises to the cell surface. It catalyses the reaction (2R)-2-phosphoglycerate = phosphoenolpyruvate + H2O. Its pathway is carbohydrate degradation; glycolysis; pyruvate from D-glyceraldehyde 3-phosphate: step 4/5. Its function is as follows. Catalyzes the reversible conversion of 2-phosphoglycerate (2-PG) into phosphoenolpyruvate (PEP). It is essential for the degradation of carbohydrates via glycolysis. The sequence is that of Enolase from Burkholderia orbicola (strain MC0-3).